Consider the following 136-residue polypeptide: Large ribosomal subunit protein uL16 (136 aa).

It belongs to the universal ribosomal protein uL16 family. Part of the 50S ribosomal subunit.

Its function is as follows. Binds 23S rRNA and is also seen to make contacts with the A and possibly P site tRNAs. This is Large ribosomal subunit protein uL16 from Ehrlichia ruminantium (strain Gardel).